The primary structure comprises 248 residues: Allergin-1 (248 aa).

A signal peptide spans 1 to 33 (MGDDDTPVCLSVASCKGVSCWLDKLLLWALTLS). Over 34-150 (ITLRNTAVDC…DESCSSCLLS (117 aa)) the chain is Extracellular. The 84-residue stretch at 54–137 (PNLNSSMSVV…SKYSQNFNFT (84 aa)) folds into the Ig-like C2-type domain. Asn68 carries an N-linked (GlcNAc...) asparagine glycan. A disulfide bridge links Cys73 with Cys120. A glycan (N-linked (GlcNAc...) asparagine) is linked at Asn135. A helical membrane pass occupies residues 151–171 (LLLPGVLLGLILPGLAFLIYL). Topologically, residues 172–248 (KYKKGCTGKT…DDYIYSELTY (77 aa)) are cytoplasmic. 2 consecutive short sequence motifs (ITIM motif) follow at residues 216 to 221 (IHYTTP) and 241 to 246 (YIYSEL). Phosphotyrosine is present on residues Tyr218 and Tyr243.

In terms of assembly, monomer. Interacts (tyrosine-phosphorylated) with PTPN6, PTPN11 and INPP5D. In terms of processing, N-glycosylated. As to expression, mast cell-specific. Expressed in primary and transformed mast cells.

It is found in the cell membrane. Functionally, immunoglobulin-like receptor which plays an inhibitory role in degranulation of mast cells. Negatively regulates IgE-mediated mast cell activation and suppresses the type I immediate hypersensitivity reaction. The chain is Allergin-1 (Milr1) from Rattus norvegicus (Rat).